Here is a 219-residue protein sequence, read N- to C-terminus: MKDFSDFFRNPHIWDREIVAVGGDLSPERLLYAYKNGIFPWSDQPILWYCLDPRSIFDLNKLHISKRLKRKINQKRYTITFNRAFEQVMRCCAYRPGEDTWITDLFIKSYTEFHKLGYAHSLEVWDENGKLGGGVYGIAIGNFFAGESMFSFIPDFGKIGLFHLFETLKKDHFTLFDTQQLNLVTLSLGAYQIPKKEYLKRLESAVASGKKWNPSHFVL.

It belongs to the L/F-transferase family.

It is found in the cytoplasm. It catalyses the reaction N-terminal L-lysyl-[protein] + L-leucyl-tRNA(Leu) = N-terminal L-leucyl-L-lysyl-[protein] + tRNA(Leu) + H(+). The catalysed reaction is N-terminal L-arginyl-[protein] + L-leucyl-tRNA(Leu) = N-terminal L-leucyl-L-arginyl-[protein] + tRNA(Leu) + H(+). The enzyme catalyses L-phenylalanyl-tRNA(Phe) + an N-terminal L-alpha-aminoacyl-[protein] = an N-terminal L-phenylalanyl-L-alpha-aminoacyl-[protein] + tRNA(Phe). Its function is as follows. Functions in the N-end rule pathway of protein degradation where it conjugates Leu, Phe and, less efficiently, Met from aminoacyl-tRNAs to the N-termini of proteins containing an N-terminal arginine or lysine. The polypeptide is Leucyl/phenylalanyl-tRNA--protein transferase (Leptospira interrogans serogroup Icterohaemorrhagiae serovar copenhageni (strain Fiocruz L1-130)).